The following is a 2471-amino-acid chain: Probable polyketide synthase 24 (2471 aa).

The Ketosynthase family 3 (KS3) domain maps to 21-449 (ENLVAIVGVG…GSNCCLVLSQ (429 aa)). Residues C190, H332, and H372 each act as for beta-ketoacyl synthase activity in the active site. Residues 654–687 (GIKASFMLGHSLGEVTTAYCSGMIDIDQLCYLIY) form an acyl/malonyl transferase region. S664 serves as the catalytic For acyl/malonyl transferase activity. An N-terminal hotdog fold region spans residues 953–1075 (ISILGNSMQD…SNFHLNSNDN (123 aa)). In terms of domain architecture, PKS/mFAS DH spans 953-1245 (ISILGNSMQD…VKSLTPVKDP (293 aa)). H987 functions as the Proton acceptor; for dehydratase activity in the catalytic mechanism. The interval 1094–1245 (NLSSIPWDEF…VKSLTPVKDP (152 aa)) is C-terminal hotdog fold. D1157 (proton donor; for dehydratase activity) is an active-site residue. The stretch at 1426–1469 (IINEQQQQQQQQQQQQQQQQQQQQQLLNNENNKESLKNLLVNCN) forms a coiled coil. One can recognise a Carrier domain in the interval 2336-2413 (SSSTNVKNKF…MVYQIINDSL (78 aa)). An O-(pantetheine 4'-phosphoryl)serine modification is found at S2373.

Requires pantetheine 4'-phosphate as cofactor.

Its function is as follows. Probable polyketide synthase. In Dictyostelium discoideum (Social amoeba), this protein is Probable polyketide synthase 24 (pks24).